A 491-amino-acid chain; its full sequence is Iota-carrageenase (491 aa).

An N-terminal signal peptide occupies residues 1-19; sequence MKLQFKPVYLASIAIMAIG. An intrachain disulfide couples C422 to C490.

It belongs to the glycosyl hydrolase 82 family.

The protein resides in the secreted. It carries out the reaction Endohydrolysis of 1,4-beta-D-linkages between D-galactose 4-sulfate and 3,6-anhydro-D-galactose-2-sulfate in iota-carrageenans.. In terms of biological role, hydrolyzes iota-carrageenans, sulfated 1,3-alpha-1,4-beta galactans from red algal cell walls, with an inversion of anomeric configuration. Also active against hybrid iota-/nu-carrageenan, not active against kappa- or lambda-carrageenans. The protein is Iota-carrageenase of Zobellia galactanivorans (strain DSM 12802 / CCUG 47099 / CIP 106680 / NCIMB 13871 / Dsij).